The primary structure comprises 748 residues: CCR4-NOT transcription complex subunit 10-A (748 aa).

Residues 1 to 17 are compositionally biased toward basic and acidic residues; it reads MAADKAGEQGAEKHEDS. Disordered regions lie at residues 1–25, 184–205, 483–524, and 605–635; these read MAAD…GISD, SNNK…EPFA, KQEN…PPSS, and VSLG…QMPQ. Over residues 185–200 the composition is skewed to low complexity; sequence NNKNGKNNETNSNANN. 2 stretches are compositionally biased toward polar residues: residues 487–509 and 605–615; these read GSKT…VCSN and VSLGVSSNEQE.

This sequence belongs to the CNOT10 family. In terms of assembly, component of the CCR4-NOT complex. cnot10 and cnot11 form a subcomplex docked to the cnot1 scaffold.

The protein localises to the cytoplasm. It localises to the nucleus. In terms of biological role, component of the CCR4-NOT complex which is one of the major cellular mRNA deadenylases and is linked to various cellular processes including bulk mRNA degradation, miRNA-mediated repression, translational repression during translational initiation and general transcription regulation. Additional complex functions may be a consequence of its influence on mRNA expression. Is not required for association of CNOT7 to the CCR4-NOT complex. In Xenopus laevis (African clawed frog), this protein is CCR4-NOT transcription complex subunit 10-A (cnot10-a).